The primary structure comprises 323 residues: Ribonuclease Z (323 aa).

Residues His-62, His-64, Asp-66, His-67, His-144, Asp-215, and His-273 each contribute to the Zn(2+) site. The active-site Proton acceptor is the Asp-66.

Belongs to the RNase Z family. Homodimer. The cofactor is Zn(2+).

The enzyme catalyses Endonucleolytic cleavage of RNA, removing extra 3' nucleotides from tRNA precursor, generating 3' termini of tRNAs. A 3'-hydroxy group is left at the tRNA terminus and a 5'-phosphoryl group is left at the trailer molecule.. Zinc phosphodiesterase, which displays some tRNA 3'-processing endonuclease activity. Probably involved in tRNA maturation, by removing a 3'-trailer from precursor tRNA. This is Ribonuclease Z from Synechococcus sp. (strain WH7803).